We begin with the raw amino-acid sequence, 30 residues long: Cyclotide mden-G (30 aa).

A cross-link (cyclopeptide (Gly-Asn)) is located at residues 1 to 30 (GIPCAESCVYIPCITAALGCSCKNKVCYRN). 3 disulfides stabilise this stretch: cysteine 4-cysteine 20, cysteine 8-cysteine 22, and cysteine 13-cysteine 27.

This sequence belongs to the cyclotide family. Bracelet subfamily. In terms of processing, this is a cyclic peptide.

Functionally, probably participates in a plant defense mechanism. This is Cyclotide mden-G from Melicytus dentatus (Tree violet).